The chain runs to 416 residues: Actin-like protein 9 (416 aa).

The disordered stretch occupies residues 1–40 (MDASRPKSSESQSSLEAPRPGPNPSPNVVNKPLQRDSPGM).

This sequence belongs to the actin family. In terms of assembly, interacts with ACTL7A. As to expression, testis-specific.

It localises to the cytoplasmic vesicle. Its subcellular location is the secretory vesicle. The protein resides in the acrosome. It is found in the cytoplasm. The protein localises to the cytoskeleton. It localises to the perinuclear theca. Its function is as follows. Testis-specic protein that plays an important role in fusion of proacrosomal vesicles and perinuclear theca formation. This is Actin-like protein 9 from Homo sapiens (Human).